An 813-amino-acid polypeptide reads, in one-letter code: Molybdenum cofactor sulfurase (813 aa).

Lys228 carries the post-translational modification N6-(pyridoxal phosphate)lysine. Residue Cys391 is part of the active site. The interval 625–670 is disordered; that stretch reads PSLRHAKAHMQKHQGPKRSAAIEKSSAHSFHDPPTPPDSDSENRKR. The span at 628–640 shows a compositional bias: basic residues; the sequence is RHAKAHMQKHQGP. In terms of domain architecture, MOSC spans 648–812; the sequence is KSSAHSFHDP…IKVGDKVSIG (165 aa).

The protein belongs to the class-V pyridoxal-phosphate-dependent aminotransferase family. MOCOS subfamily. The cofactor is pyridoxal 5'-phosphate.

It catalyses the reaction Mo-molybdopterin + L-cysteine + AH2 = thio-Mo-molybdopterin + L-alanine + A + H2O. Its function is as follows. Sulfurates the molybdenum cofactor. Sulfation of molybdenum is essential for xanthine dehydrogenase (XDH) and aldehyde oxidase (ADO) enzymes in which molybdenum cofactor is liganded by 1 oxygen and 1 sulfur atom in active form. In Botryotinia fuckeliana (strain B05.10) (Noble rot fungus), this protein is Molybdenum cofactor sulfurase.